The sequence spans 177 residues: Nuclear export protein (177 aa).

2 consecutive short sequence motifs (nuclear export signal) follow at residues 91–100 (LWLPMKSLSL) and 117–127 (MKHQILTRLKL).

Binds M1 protein. May interact with human nucleoporins and exportin XPO1/CRM1.

The protein resides in the virion. It localises to the host nucleus. Mediates the nuclear export of encapsidated genomic RNAs (ribonucleoproteins, RNPs). Acts as an adapter between viral RNPs complexes and the nuclear export machinery of the cell. Possesses no intrinsic RNA-binding activity, but includes a C-terminal M1-binding domain. This domain is believed to allow recognition of RNPs to which the M1 protein is bound. Because the M1 protein is not available in large quantities until the later stages of infection, such an indirect recognition mechanism probably ensures that genomic RNPs are not exported from the nucleus before sufficient quantities of viral mRNA and progeny genomic RNA have been synthesized. Furthermore, the RNPs enters the cytoplasm only when they have associated with the M1 protein that is necessary to guide them to the plasma membrane. May down-regulate viral RNA synthesis when overproduced. The polypeptide is Nuclear export protein (NS) (Homo sapiens (Human)).